We begin with the raw amino-acid sequence, 345 residues long: Holliday junction branch migration complex subunit RuvB (345 aa).

The interval 1-183 is large ATPase domain (RuvB-L); the sequence is MTTQRLVSAA…FGIVHRLEFY (183 aa). Residues isoleucine 22, arginine 23, glycine 64, lysine 67, threonine 68, threonine 69, 130–132, arginine 173, tyrosine 183, and arginine 220 each bind ATP; that span reads EDY. Threonine 68 is a Mg(2+) binding site. Positions 184 to 254 are small ATPAse domain (RuvB-S); it reads SVEELSRIVA…VAGKALEMLD (71 aa). The interval 257-345 is head domain (RuvB-H); the sequence is PNGFDQSDRR…NVNEELFGDE (89 aa). The DNA site is built by arginine 293, arginine 312, and arginine 317.

The protein belongs to the RuvB family. As to quaternary structure, homohexamer. Forms an RuvA(8)-RuvB(12)-Holliday junction (HJ) complex. HJ DNA is sandwiched between 2 RuvA tetramers; dsDNA enters through RuvA and exits via RuvB. An RuvB hexamer assembles on each DNA strand where it exits the tetramer. Each RuvB hexamer is contacted by two RuvA subunits (via domain III) on 2 adjacent RuvB subunits; this complex drives branch migration. In the full resolvosome a probable DNA-RuvA(4)-RuvB(12)-RuvC(2) complex forms which resolves the HJ.

Its subcellular location is the cytoplasm. The enzyme catalyses ATP + H2O = ADP + phosphate + H(+). The RuvA-RuvB-RuvC complex processes Holliday junction (HJ) DNA during genetic recombination and DNA repair, while the RuvA-RuvB complex plays an important role in the rescue of blocked DNA replication forks via replication fork reversal (RFR). RuvA specifically binds to HJ cruciform DNA, conferring on it an open structure. The RuvB hexamer acts as an ATP-dependent pump, pulling dsDNA into and through the RuvAB complex. RuvB forms 2 homohexamers on either side of HJ DNA bound by 1 or 2 RuvA tetramers; 4 subunits per hexamer contact DNA at a time. Coordinated motions by a converter formed by DNA-disengaged RuvB subunits stimulates ATP hydrolysis and nucleotide exchange. Immobilization of the converter enables RuvB to convert the ATP-contained energy into a lever motion, pulling 2 nucleotides of DNA out of the RuvA tetramer per ATP hydrolyzed, thus driving DNA branch migration. The RuvB motors rotate together with the DNA substrate, which together with the progressing nucleotide cycle form the mechanistic basis for DNA recombination by continuous HJ branch migration. Branch migration allows RuvC to scan DNA until it finds its consensus sequence, where it cleaves and resolves cruciform DNA. The sequence is that of Holliday junction branch migration complex subunit RuvB from Methylococcus capsulatus (strain ATCC 33009 / NCIMB 11132 / Bath).